The chain runs to 390 residues: GTPase Obg (390 aa).

Positions 1 to 159 (MKFVDEATIL…RDLQLELMLL (159 aa)) constitute an Obg domain. The segment at 127-146 (NTRFKSSVNRTPRQKTMGTP) is disordered. The segment covering 129-143 (RFKSSVNRTPRQKTM) has biased composition (polar residues). One can recognise an OBG-type G domain in the interval 160 to 333 (ADVGMLGMPN…LCWDVMHFII (174 aa)). GTP is bound by residues 166–173 (GMPNAGKS), 191–195 (FTTLV), 213–216 (DIPG), 283–286 (NKID), and 314–316 (SAA). Mg(2+)-binding residues include serine 173 and threonine 193. The span at 364–384 (MEAEAEEEWDDDWDEDDDEGV) shows a compositional bias: acidic residues. The segment at 364 to 390 (MEAEAEEEWDDDWDEDDDEGVEIVYQR) is disordered.

This sequence belongs to the TRAFAC class OBG-HflX-like GTPase superfamily. OBG GTPase family. In terms of assembly, monomer. Mg(2+) serves as cofactor.

The protein resides in the cytoplasm. In terms of biological role, an essential GTPase which binds GTP, GDP and possibly (p)ppGpp with moderate affinity, with high nucleotide exchange rates and a fairly low GTP hydrolysis rate. Plays a role in control of the cell cycle, stress response, ribosome biogenesis and in those bacteria that undergo differentiation, in morphogenesis control. In Cronobacter sakazakii (strain ATCC BAA-894) (Enterobacter sakazakii), this protein is GTPase Obg.